We begin with the raw amino-acid sequence, 275 residues long: MGIRIYRSYTPGTRNRSSSDFSEITKSKPEKSLLAKKTQKAGRNHRGVITVRHRGGGHKQRYRIVDFKRNKRDIEAKVASIQYDPNRNARIALLHYKDGEKRYILAPKNLSVGAQVSAGETAPLDVGNALPLSNIPLGTSVHNIELLPGKGGQIIRAAGTSAQIVAKEGNFVTLKLPSSEVRMVYKQCYATIGEVGNAEFKNLTLGKAGRKRWLGIRPTVRGVVMNPCDHPHGGGEGRSPIGRARPVTPWGAPALGMKTRRKNKYSDFCIIRRRK.

Disordered regions lie at residues 1 to 28 (MGIRIYRSYTPGTRNRSSSDFSEITKSK) and 227 to 251 (PCDHPHGGGEGRSPIGRARPVTPWG). A compositionally biased stretch (polar residues) spans 10-22 (TPGTRNRSSSDFS).

It belongs to the universal ribosomal protein uL2 family. In terms of assembly, part of the 50S ribosomal subunit.

It localises to the plastid. The protein localises to the chloroplast. This is Large ribosomal subunit protein uL2c (rpl2) from Rhodomonas salina (Cryptomonas salina).